A 185-amino-acid chain; its full sequence is MTVAEVLADARDRMGKAVEAVKEDFGSVRTGRANPALFQKVMVEYYGSPTPLGQLASMNNPEARTLIVTPYDKTALKEIEKALVNVPNLSATVGNDGEMVRFTLPELTEDRRKEFVKIVRGKAEEGRVSVRNIRRRSKDELDALKGEVGDDEVARVEKELEALTKTHTDQVDDALKRKETELLEV.

It belongs to the RRF family.

It is found in the cytoplasm. In terms of biological role, responsible for the release of ribosomes from messenger RNA at the termination of protein biosynthesis. May increase the efficiency of translation by recycling ribosomes from one round of translation to another. The sequence is that of Ribosome-recycling factor from Clavibacter sepedonicus (Clavibacter michiganensis subsp. sepedonicus).